Consider the following 300-residue polypeptide: m7GpppN-mRNA hydrolase NUDT17 (300 aa).

In terms of domain architecture, Nudix hydrolase spans 88-239; sequence SRGVDVGVAV…KECVQIPADL (152 aa). The Nudix box signature appears at 127 to 148; the sequence is GHVELDEKLLDAGLRELLEETG. Mg(2+)-binding residues include Glu142 and Glu146.

This sequence belongs to the Nudix hydrolase family. The cofactor is Mg(2+). Mn(2+) is required as a cofactor.

The enzyme catalyses a 5'-end (N(7)-methyl 5'-triphosphoguanosine)-ribonucleoside in mRNA + H2O = N(7)-methyl-GDP + a 5'-end phospho-ribonucleoside in mRNA + 2 H(+). Acts as a decapping enzyme capable of hydrolyzing monomethylated capped RNAs (in vitro). Hydrolyzes monomethylated capped RNA after alpha and beta phosphates to form N(7)-methyl-GDP. Shows low activity towards unmethylated capped RNA. The chain is m7GpppN-mRNA hydrolase NUDT17 (nudt17) from Danio rerio (Zebrafish).